Reading from the N-terminus, the 233-residue chain is Biosynthetic peptidoglycan transglycosylase (233 aa).

Residues 17 to 37 traverse the membrane as a helical segment; it reads IVLAVLALVVLPYVLIFFYLL.

It belongs to the glycosyltransferase 51 family.

The protein localises to the cell inner membrane. The catalysed reaction is [GlcNAc-(1-&gt;4)-Mur2Ac(oyl-L-Ala-gamma-D-Glu-L-Lys-D-Ala-D-Ala)](n)-di-trans,octa-cis-undecaprenyl diphosphate + beta-D-GlcNAc-(1-&gt;4)-Mur2Ac(oyl-L-Ala-gamma-D-Glu-L-Lys-D-Ala-D-Ala)-di-trans,octa-cis-undecaprenyl diphosphate = [GlcNAc-(1-&gt;4)-Mur2Ac(oyl-L-Ala-gamma-D-Glu-L-Lys-D-Ala-D-Ala)](n+1)-di-trans,octa-cis-undecaprenyl diphosphate + di-trans,octa-cis-undecaprenyl diphosphate + H(+). It functions in the pathway cell wall biogenesis; peptidoglycan biosynthesis. Its function is as follows. Peptidoglycan polymerase that catalyzes glycan chain elongation from lipid-linked precursors. The polypeptide is Biosynthetic peptidoglycan transglycosylase (Rhizobium etli (strain ATCC 51251 / DSM 11541 / JCM 21823 / NBRC 15573 / CFN 42)).